Consider the following 132-residue polypeptide: Phosphomevalonate dehydratase small subunit (132 aa).

S58 (proton acceptor) is an active-site residue.

Belongs to the AcnX type II small subunit family. As to quaternary structure, heterodimer composed of a large subunit (PMDh-L) and a small subunit (PMDh-S).

It catalyses the reaction (R)-5-phosphomevalonate = (2E)-3-methyl-5-phosphooxypent-2-enoate + H2O. The protein operates within isoprenoid biosynthesis; isopentenyl diphosphate biosynthesis via mevalonate pathway. Neither the addition of 1 mM Mg(2+) nor 1 mM Mn(2+) has a significant effect on the activity, whereas Zn(2+) causes almost complete inactivation. Strongly inhibited by H(2)O(2), but not by EDTA or iodoacetamide. Its function is as follows. Component of a hydro-lyase that catalyzes the dehydration of mevalonate 5-phosphate (MVA5P) to form trans-anhydromevalonate 5-phosphate (tAHMP). Involved in the archaeal mevalonate (MVA) pathway, which provides fundamental precursors for isoprenoid biosynthesis, such as isopentenyl diphosphate (IPP) and dimethylallyl diphosphate (DMAPP). The polypeptide is Phosphomevalonate dehydratase small subunit (Aeropyrum pernix (strain ATCC 700893 / DSM 11879 / JCM 9820 / NBRC 100138 / K1)).